Here is a 281-residue protein sequence, read N- to C-terminus: Hepatitis A virus cellular receptor 2 homolog (281 aa).

The N-terminal stretch at 1–19 (MFSGLTLNCVLLLLQLLLA) is a signal peptide. Residues 20 to 125 (RSLENAYVFE…PGLMNDKKLE (106 aa)) form the Ig-like V-type domain. Topologically, residues 20-193 (RSLENAYVFE…KDSGETIRTA (174 aa)) are extracellular. 3 cysteine pairs are disulfide-bonded: cysteine 38-cysteine 111, cysteine 52-cysteine 63, and cysteine 58-cysteine 110. 2 residues coordinate a 1,2-diacyl-sn-glycero-3-phospho-L-serine: serine 61 and glutamine 62. N-linked (GlcNAc...) asparagine glycosylation is found at asparagine 74 and asparagine 100. A 1,2-diacyl-sn-glycero-3-phospho-L-serine is bound at residue arginine 112. Ca(2+) is bound by residues phenylalanine 115 and glycine 117. Residue methionine 119 participates in a 1,2-diacyl-sn-glycero-3-phospho-L-serine binding. Asparagine 120 contacts Ca(2+). The disordered stretch occupies residues 139-160 (QTAHGDSTTASPRTLTTERNGS). Threonine 146 is a glycosylation site (O-linked (GalNAc...) threonine). Asparagine 172 is a glycosylation site (N-linked (GlcNAc...) asparagine). A helical membrane pass occupies residues 194-214 (IHIGVGVSAGLTLALIIGVLI). The Cytoplasmic segment spans residues 215–281 (LKWYSCKKKK…YCYVNSQQPS (67 aa)). Residues 252–270 (EENIYTIEENVYEVENSNE) form an interaction with BAG6 region. The residue at position 256 (tyrosine 256) is a Phosphotyrosine; by ITK.

It belongs to the immunoglobulin superfamily. TIM family. As to quaternary structure, interacts with HMGB1; impairs HMGB1 binding to B-DNA and likely HMGB1-mediated innate immune response. Interacts with BAG6. Interacts (phosphorylated) with PIK3R1 and PIK3R2. Interacts (not dependent on its phosphorylation status) with FYN. Interacts (in basal state T-cells) with VAV1; AKT1/2, LCP2, ZAP70, SYK, PIK3R1, FYN, SH3BP2 and SH2D2A. Interacts (in activated T-cells) with LCK and PLCG. Interacts with ILF3; this interaction promotes ILF3 ubiquitination and degradation. In terms of processing, phosphorylated on tyrosine residues; modestly increased after TCR/CD28 stimulation. Can be phosphorylated in the cytoplasmic domain by FYN. Phosphorylation at Tyr-256 is increased by stimulation with ligand LGALS9. N-glycosylated. As to expression, expressed in T-helper type 1 lymphocytes. Not expressed by naive T-cells but up-regulated as they differentiate into T-helper-1 cells. Also expressed by differentiated type 1 CD8+ cytotoxic T-cells. Expressed on peritoneal exudate macrophages, monocytes, and splenic dendritic cells (DCs). Expression on natural killer (NK) cells is inversely associated with IFN-gamma production during the initial 24 hours of LPS-induced endotoxic shock. Expressed on mast cells.

Its subcellular location is the membrane. The protein localises to the cell junction. The protein resides in the secreted. Cell surface receptor implicated in modulating innate and adaptive immune responses. Generally accepted to have an inhibiting function. Reports on stimulating functions suggest that the activity may be influenced by the cellular context and/or the respective ligand. Regulates macrophage activation. Inhibits T-helper type 1 lymphocyte (Th1)-mediated auto- and alloimmune responses and promotes immunological tolerance. In CD8+ cells attenuates TCR-induced signaling, specifically by blocking NF-kappaB and NFAT promoter activities resulting in the loss of IL-2 secretion. The function may implicate its association with LCK proposed to impair phosphorylation of TCR subunits. In contrast, shown to activate TCR-induced signaling in T-cells probably implicating ZAP70, LCP2, LCK and FYN. Expressed on Treg cells can inhibit Th17 cell responses. Receptor for LGALS9. Binding to LGALS9 is believed to result in suppression of T-cell responses; the resulting apoptosis of antigen-specific cells may implicate HAVCR2 phosphorylation and disruption of its association with BAG6. Binding to LGALS9 is proposed to be involved in innate immune response to intracellular pathogens. Expressed on Th1 cells interacts with LGALS9 expressed on Mycobacterium tuberculosis-infected macrophages to stimulate antibactericidal activity including IL-1 beta secretion and to restrict intracellular bacterial growth. However, the function as receptor for LGALS9 has been challenged. Also reported to enhance CD8+ T-cell responses to an acute infection such as by Listeria monocytogenes. Receptor for phosphatidylserine (PtSer); PtSer-binding is calcium-dependent. May recognize PtSer on apoptotic cells leading to their phagocytosis. Mediates the engulfment of apoptotic cells by dendritic cells. Expressed on T-cells, promotes conjugation but not engulfment of apoptotic cells. Expressed on dendritic cells (DCs) positively regulates innate immune response and in synergy with Toll-like receptors promotes secretion of TNF-alpha. In tumor-imfiltrating DCs suppresses nucleic acid-mediated innate immune repsonse by interaction with HMGB1 and interfering with nucleic acid-sensing and trafficking of nucleid acids to endosomes. Can enhance mast cell production of Th2 cytokines Il-4, IL-6 and IL-13. Expressed on natural killer (NK) cells acts as a coreceptor to enhance IFN-gamma production in response to LGALS9. In contrast, shown to suppress NK cell-mediated cytotoxicity. Negatively regulates NK cell function in LPS-induced endotoxic shock. The protein is Hepatitis A virus cellular receptor 2 homolog (Havcr2) of Mus musculus (Mouse).